A 316-amino-acid chain; its full sequence is Protoheme IX farnesyltransferase (316 aa).

The next 9 helical transmembrane spans lie at Val-34 to Asn-54, Pro-55 to Leu-75, Ile-95 to Phe-115, Ile-118 to Phe-138, Ile-155 to Gly-175, Ile-182 to Phe-202, Ile-228 to Leu-250, Ala-254 to Met-273, and Phe-287 to Ile-307.

This sequence belongs to the UbiA prenyltransferase family. Protoheme IX farnesyltransferase subfamily.

The protein resides in the cell inner membrane. The catalysed reaction is heme b + (2E,6E)-farnesyl diphosphate + H2O = Fe(II)-heme o + diphosphate. It participates in porphyrin-containing compound metabolism; heme O biosynthesis; heme O from protoheme: step 1/1. Functionally, converts heme B (protoheme IX) to heme O by substitution of the vinyl group on carbon 2 of heme B porphyrin ring with a hydroxyethyl farnesyl side group. The chain is Protoheme IX farnesyltransferase from Rhizobium meliloti (strain 1021) (Ensifer meliloti).